Consider the following 547-residue polypeptide: Chaperonin GroEL (547 aa).

ATP contacts are provided by residues 30 to 33 (TLGP), lysine 51, 87 to 91 (DGTTT), glycine 415, and aspartate 496. Residues 527–547 (SDKAEPMPMRGGMGGMGGMDF) form a disordered region. The span at 537–547 (GGMGGMGGMDF) shows a compositional bias: gly residues.

Belongs to the chaperonin (HSP60) family. Forms a cylinder of 14 subunits composed of two heptameric rings stacked back-to-back. Interacts with the co-chaperonin GroES.

The protein resides in the cytoplasm. The catalysed reaction is ATP + H2O + a folded polypeptide = ADP + phosphate + an unfolded polypeptide.. Its function is as follows. Together with its co-chaperonin GroES, plays an essential role in assisting protein folding. The GroEL-GroES system forms a nano-cage that allows encapsulation of the non-native substrate proteins and provides a physical environment optimized to promote and accelerate protein folding. This is Chaperonin GroEL from Rickettsia africae (strain ESF-5).